We begin with the raw amino-acid sequence, 317 residues long: Tenomodulin (317 aa).

Residues 1–30 (MAKNPPENCEGCHILNAEALKSKKIRKSLK) are Cytoplasmic-facing. A helical; Signal-anchor for type II membrane protein membrane pass occupies residues 31 to 50 (ICGLVFGILALTLIVLFWGS). The Extracellular portion of the chain corresponds to 51 to 317 (KHFWPEVSKK…WWVARMLGRV (267 aa)). The 94-residue stretch at 93-186 (GNGTDETLEV…ICDNVTMYWI (94 aa)) folds into the BRICHOS domain. N-linked (GlcNAc...) asparagine glycosylation is present at Asn94. An intrachain disulfide couples Cys120 to Cys178. Asn180 carries an N-linked (GlcNAc...) asparagine glycan. Ser239 carries the post-translational modification Phosphoserine.

This sequence belongs to the chondromodulin-1 family. Highly expressed in tendons.

The protein localises to the membrane. It localises to the nucleus envelope. May be an angiogenesis inhibitor. The sequence is that of Tenomodulin (Tnmd) from Rattus norvegicus (Rat).